The sequence spans 928 residues: MEIKEEGTSEEGQHFLPAAQANDPEDIQFTSIQKSPNEPQLEFILACKDLVAPVSDRKLNTVVQVSVIHPVEQTLTRYSSTEIVEGTKDPLFLTGVTFPSDYPIYEETRIKLTVYDVKDKPHDTIRTSVLPEHKDPPPEVARSFLGCASFKVGELLKSKEQLLSLSLRTSDGGKVVGTIEVSLVKMGEIEDGDTDHITTDVQGQKCALVYDSTAPESLSGKENLPFMNAVLRNPVCKLYRFPTSDNKWMRIREQMSESILSFHIPKELISLHIKEDLCRNQELKELGDLSPHWDNLRNNVLSHCDQMVTMYQDILTELSKETGSSFKSSSSKGEKTLEFVPINLHLQRMQVHSPHLKDALYDVITVGAPAAHFQGFKNGGLRKLLHRFETERRNTGYQFIYYSPENTAKAKEVLSSINQLQPLVATHADLLLTSASQHSPDSLRSSLKLLSEKTELFVHAFKDQLVRSALLALYTARPGGILRKPPSPKVSTEEKSSQHDSPQQLRRQDSIPHHSDYDEEEWDRVWANVGKSLNCIIAKVDKLIERDSRNDKSTGGDSSKDGDADPNLEDSLTSHPREDWYEQLHPLILTLKECMAEVVNRAKQSLTFVLLQELAYSLPQCLMLTLRRDIVFSQALAGLVCGFIIKLHTSLHDPGFLQQLHTVGLIVQYEGLLSTYSDEIGMLEDMAVGISDLRKVAFKITEATSNDVLPVLTGRREHYVVEVKLPATVFESLPLQIKEGQLLHVYPVLFNVGINEQQTLAERFGDVSLQESINQENFELVQEYYSIFMEKMPPDYISHFQEQNDLKGLLDNLHQNIQAKKRKNVEIMWLAATICRKLNGIRFTCCKSAKDRTSMSVTLEQCSILRDEHQLHKDFFIRALDCMRREGCRIENVLKNIKCRRYAFNMLQLMAFPKCYRPPEGTYGKADT.

The span at 1-13 (MEIKEEGTSEEGQ) shows a compositional bias: basic and acidic residues. Disordered stretches follow at residues 1–23 (MEIK…QAND), 481–516 (ILRK…HHSD), and 548–575 (SRND…LTSH). In terms of domain architecture, C2 spans 23–165 (DPEDIQFTSI…LKSKEQLLSL (143 aa)). 2 stretches are compositionally biased toward basic and acidic residues: residues 506-516 (RRQDSIPHHSD) and 548-563 (SRND…KDGD).

Belongs to the inositol 3,4-bisphosphate 4-phosphatase family.

It carries out the reaction a 1,2-diacyl-sn-glycero-3-phospho-(1D-myo-inositol-3,4-bisphosphate) + H2O = a 1,2-diacyl-sn-glycero-3-phospho-(1D-myo-inositol-3-phosphate) + phosphate. It catalyses the reaction 1D-myo-inositol 3,4-bisphosphate + H2O = 1D-myo-inositol 3-phosphate + phosphate. The enzyme catalyses 1D-myo-inositol 1,3,4-trisphosphate + H2O = 1D-myo-inositol 1,3-bisphosphate + phosphate. The protein operates within signal transduction; phosphatidylinositol signaling pathway. Its activity is regulated as follows. Strongly inhibited by inositol hexakisphosphate. In terms of biological role, catalyzes the hydrolysis of the 4-position phosphate of phosphatidylinositol 3,4-bisphosphate, inositol 1,3,4-trisphosphate and inositol 3,4-bisphosphate. Plays a role in the late stages of macropinocytosis by dephosphorylating phosphatidylinositol 3,4-bisphosphate in membrane ruffles. The lipid phosphatase activity is critical for tumor suppressor function. Antagonizes the PI3K-AKT/PKB signaling pathway by dephosphorylating phosphoinositides and thereby modulating cell cycle progression and cell survival. The sequence is that of Type II inositol 3,4-bisphosphate 4-phosphatase (Inpp4b) from Rattus norvegicus (Rat).